The sequence spans 218 residues: Large ribosomal subunit protein uL1 (218 aa).

This sequence belongs to the universal ribosomal protein uL1 family. Part of the 50S ribosomal subunit.

In terms of biological role, probably involved in E site tRNA release. Binds directly to 23S rRNA. Its function is as follows. Protein L1 is also a translational repressor protein, it controls the translation of its operon by binding to its mRNA. This Saccharolobus solfataricus (strain ATCC 35092 / DSM 1617 / JCM 11322 / P2) (Sulfolobus solfataricus) protein is Large ribosomal subunit protein uL1.